The chain runs to 497 residues: MSQVIQYSEADLLYLSKSPLIKKPENLPEWILPEAMKADRERHIRQEKEMKRHDDDGRQYQSDRKFAKSKHDDIILGPPKLSFASSNENGRSVGRHDDLLSLGNVYNGVASLRYRNGASVSRSSSIGHSGSTAPWSSVGRHNRKKDNEHRDEMEGLEKVMKQRAGNTGPLVANSTEEFEAWKRMMKASSGEAGAGNVITPGVTSTTGAPSGKASLSRAASNSSTSARAGISVDSLFGKRSAAQAMATVVPSVSTPGGTPPRFASPALTVESMVHAAPSTTTSSRFSKFFNGLAGPETSKTSTPNMSNNPSPRVANTVVSPAPIPTIGSATIDKDAEGFQRVLAMLGRQASSTTGSPKVALSQMPQVNVNPSNQDLASVKQPSGFSPPSAVAPPPGLGNHNFSNDDSSFFRSLMTSDTRSVPPPPGFSTNAPKAVKSPEISAPPGLYRGLSSGASIPSAPPGFGYQQPSFPYSPGFPPSAYNQNRTGYGFPDTSRPPH.

The span at Ile-44–Ile-74 shows a compositional bias: basic and acidic residues. 3 disordered regions span residues Ile-44 to Arg-95, Val-120 to Asp-151, and Gly-195 to Arg-227. Low complexity predominate over residues Val-120–Ser-131. 3 positions are modified to phosphoserine: Ser-123, Ser-125, and Ser-131. Thr-132 bears the Phosphothreonine mark. Positions Ala-213–Arg-227 are enriched in low complexity. Position 258 is a phosphothreonine (Thr-258). Ser-310 bears the Phosphoserine mark. The span at Asn-367–Ser-385 shows a compositional bias: polar residues. The tract at residues Asn-367–His-497 is disordered. The segment covering Asn-400 to Phe-409 has biased composition (low complexity). A Phosphoserine modification is found at Ser-436. Low complexity predominate over residues Gly-448–Ser-472.

It localises to the cytoplasm. It is found in the nucleus. This is an uncharacterized protein from Schizosaccharomyces pombe (strain 972 / ATCC 24843) (Fission yeast).